The chain runs to 805 residues: Cell division cycle 5-related protein (805 aa).

2 HTH myb-type domains span residues 1–58 (MPRI…DPSI) and 59–108 (KKTE…DQAQ). DNA-binding regions (H-T-H motif) lie at residues 31-54 (WSRI…YEWL) and 82-104 (WRTI…EYLL). Residues 108–127 (QAKEGDKDEGDDPRKLRPGE) show a composition bias toward basic and acidic residues. 4 disordered regions span residues 108–143 (QAKE…DPID), 246–293 (HLEG…HVKK), 409–442 (LSTP…QRSV), and 530–556 (LERR…VLRP). A coiled-coil region spans residues 142 to 193 (IDMDEDELEMLSEARARLANTQGKKAKRKAREKQLEEARRLAALQKRRELRA). The segment covering 246-274 (HLEGKMRDEIEQQERKKDKERMKKKKESD) has biased composition (basic and acidic residues). Coiled coils occupy residues 511–542 (EDAA…VQRE) and 678–804 (YTRA…SKLQ).

This sequence belongs to the CEF1 family. In terms of assembly, component of the precatalytic, catalytic and postcatalytic spliceosome complexes.

It localises to the nucleus. It is found in the cytoplasm. Its function is as follows. DNA-binding protein involved in cell cycle control. May act as a transcription activator. Plays a role in pre-mRNA splicing as core component of precatalytic, catalytic and postcatalytic spliceosomal complexes. May also play a role in the response to DNA damage (DDR). The chain is Cell division cycle 5-related protein (cdc5l) from Nematostella vectensis (Starlet sea anemone).